We begin with the raw amino-acid sequence, 455 residues long: Chromosomal replication initiator protein DnaA (455 aa).

Residues 1–73 are domain I, interacts with DnaA modulators; the sequence is MTISPQYIWN…LEEVETIVGY (73 aa). Residues 73–114 form a domain II region; the sequence is YPIAVKLTTSQEQNLRIVDKNKDNLSSTKLQNKRQQESPKLN. The domain III, AAA+ region stretch occupies residues 115 to 331; sequence QLNPRYNFSR…GALIRAVTYI (217 aa). ATP contacts are provided by G159, G161, K162, and T163. The domain IV, binds dsDNA stretch occupies residues 332-455; that stretch reads SISGLSMTVE…RINIASRNQN (124 aa).

This sequence belongs to the DnaA family. Oligomerizes as a right-handed, spiral filament on DNA at oriC.

Its subcellular location is the cytoplasm. In terms of biological role, plays an essential role in the initiation and regulation of chromosomal replication. ATP-DnaA binds to the origin of replication (oriC) to initiate formation of the DNA replication initiation complex once per cell cycle. Binds the DnaA box (a 9 base pair repeat at the origin) and separates the double-stranded (ds)DNA. Forms a right-handed helical filament on oriC DNA; dsDNA binds to the exterior of the filament while single-stranded (ss)DNA is stabiized in the filament's interior. The ATP-DnaA-oriC complex binds and stabilizes one strand of the AT-rich DNA unwinding element (DUE), permitting loading of DNA polymerase. After initiation quickly degrades to an ADP-DnaA complex that is not apt for DNA replication. Binds acidic phospholipids. In Crocosphaera subtropica (strain ATCC 51142 / BH68) (Cyanothece sp. (strain ATCC 51142)), this protein is Chromosomal replication initiator protein DnaA.